Here is a 618-residue protein sequence, read N- to C-terminus: Elongation factor 4 (618 aa).

In terms of domain architecture, tr-type G spans 17 to 198 (AIIRNFCIIA…KIVRDLPAPE (182 aa)). GTP is bound by residues 29 to 34 (DHGKST) and 145 to 148 (NKID).

It belongs to the TRAFAC class translation factor GTPase superfamily. Classic translation factor GTPase family. LepA subfamily.

The protein resides in the cell membrane. The enzyme catalyses GTP + H2O = GDP + phosphate + H(+). Required for accurate and efficient protein synthesis under certain stress conditions. May act as a fidelity factor of the translation reaction, by catalyzing a one-codon backward translocation of tRNAs on improperly translocated ribosomes. Back-translocation proceeds from a post-translocation (POST) complex to a pre-translocation (PRE) complex, thus giving elongation factor G a second chance to translocate the tRNAs correctly. Binds to ribosomes in a GTP-dependent manner. The chain is Elongation factor 4 from Pseudarthrobacter chlorophenolicus (strain ATCC 700700 / DSM 12829 / CIP 107037 / JCM 12360 / KCTC 9906 / NCIMB 13794 / A6) (Arthrobacter chlorophenolicus).